We begin with the raw amino-acid sequence, 120 residues long: Immunoglobulin kappa variable 2-24 (120 aa).

An N-terminal signal peptide occupies residues 1–19; sequence MRLLAQLLGLLMLWVPGSS. In terms of domain architecture, Ig-like spans 20–120; the sequence is GDIVMTQTPL…YYCMQATQFP (101 aa). Residues 21–43 are framework-1; the sequence is DIVMTQTPLSSPVTLGQPASISC. A disulfide bridge links Cys43 with Cys113. A complementarity-determining-1 region spans residues 44–59; that stretch reads RSSQSLVHSDGNTYLS. Positions 60-74 are framework-2; the sequence is WLQQRPGQPPRLLIY. The segment at 75–81 is complementarity-determining-2; the sequence is KISNRFS. Positions 82–113 are framework-3; it reads GVPDRFSGSGAGTDFTLKISRVEAEDVGVYYC. Residues 114 to 120 form a complementarity-determining-3 region; that stretch reads MQATQFP.

In terms of assembly, immunoglobulins are composed of two identical heavy chains and two identical light chains; disulfide-linked.

The protein resides in the secreted. It is found in the cell membrane. Its function is as follows. V region of the variable domain of immunoglobulin light chains that participates in the antigen recognition. Immunoglobulins, also known as antibodies, are membrane-bound or secreted glycoproteins produced by B lymphocytes. In the recognition phase of humoral immunity, the membrane-bound immunoglobulins serve as receptors which, upon binding of a specific antigen, trigger the clonal expansion and differentiation of B lymphocytes into immunoglobulins-secreting plasma cells. Secreted immunoglobulins mediate the effector phase of humoral immunity, which results in the elimination of bound antigens. The antigen binding site is formed by the variable domain of one heavy chain, together with that of its associated light chain. Thus, each immunoglobulin has two antigen binding sites with remarkable affinity for a particular antigen. The variable domains are assembled by a process called V-(D)-J rearrangement and can then be subjected to somatic hypermutations which, after exposure to antigen and selection, allow affinity maturation for a particular antigen. The protein is Immunoglobulin kappa variable 2-24 of Homo sapiens (Human).